A 58-amino-acid polypeptide reads, in one-letter code: Small ribosomal subunit protein bS21 (58 aa).

The tract at residues 34-58 is disordered; that stretch reads KREHYEKPSVKRKKKSEAARKRKFK. Residues 43–58 show a composition bias toward basic residues; sequence VKRKKKSEAARKRKFK.

This sequence belongs to the bacterial ribosomal protein bS21 family.

The protein is Small ribosomal subunit protein bS21 of Clostridium acetobutylicum (strain ATCC 824 / DSM 792 / JCM 1419 / IAM 19013 / LMG 5710 / NBRC 13948 / NRRL B-527 / VKM B-1787 / 2291 / W).